A 231-amino-acid chain; its full sequence is Protein usf (231 aa).

The chain is Protein usf (usf) from Aquifex pyrophilus.